The following is a 475-amino-acid chain: MRDYTKQYINGEWVESNSNETIEVINPATEEVIGKVAKGNKADVDKAVEAADNVYLEFRHTSVKERQALLDKIVKEYENRKDDIVQAITDELGAPLSLSERVHYQMGLNHFVAARDALDNYEFEERRGDDLVVKEAIGVSGLITPWNFPTNQTSLKLAAAFAAGSPVVLKPSEETPFAAVILAEIFDKVGVPKGVFNLVNGDGAGVGNPLSEHPKVRMMSFTGSGPTGSKIMEKAAKDFKKVSLELGGKSPYIVLDDVDIKEAAKATTGKVVNNTGQVCTAGTRVLVPKKIKDAFLAELKEQFSQVRVGNPREDGTQVGPIISKKQFDQVQNYINKGIEEGAELFYGGPGKPEGLEKGYFARPTIFINVDNQMTIAQEEIFGPVMSVITYNDLDEAIQIANDTKYGLAGYVIGKDKETLHKVARSIEAGTVEINEAGRKPDLPFGGYKQSGLGREWGDYGIEEFLEVKSIAGYFK.

NAD(+) contacts are provided by residues W146–N147 and G223–S224. Catalysis depends on E245, which acts as the Proton acceptor. Position 246 (L246) interacts with NAD(+). Catalysis depends on C279, which acts as the Nucleophile. E379 lines the NAD(+) pocket.

It belongs to the aldehyde dehydrogenase family.

It catalyses the reaction an aldehyde + NAD(+) + H2O = a carboxylate + NADH + 2 H(+). This Staphylococcus aureus (strain MSSA476) protein is Putative aldehyde dehydrogenase.